We begin with the raw amino-acid sequence, 947 residues long: Translation initiation factor IF-2 (947 aa).

Positions 61 to 284 are disordered; that stretch reads IQANQPAKNP…TAKNNKSHKI (224 aa). The span at 151-169 shows a compositional bias: basic and acidic residues; sequence QIEKAKQKLQEIQKSREAL. Low complexity predominate over residues 175–188; that stretch reads SNANNANSTNNANN. Residues 189-206 show a composition bias toward basic and acidic residues; the sequence is AKKEISEVKKQEQEIKRH. Residues 207-218 show a composition bias toward basic residues; that stretch reads ENIKRRTGFRVI. Residues 247 to 262 show a composition bias toward basic and acidic residues; that stretch reads EDIKKEWQEKDKQEAK. Residues 446 to 615 form the tr-type G domain; the sequence is ERPPVVTIMG…LIQADIMELK (170 aa). The interval 455–462 is G1; the sequence is GHVDHGKT. 455–462 provides a ligand contact to GTP; the sequence is GHVDHGKT. A G2 region spans residues 480-484; that stretch reads GITQH. Positions 501-504 are G3; sequence DTPG. Residues 501-505 and 555-558 contribute to the GTP site; these read DTPGH and NKMD. Residues 555 to 558 form a G4 region; it reads NKMD. A G5 region spans residues 591–593; the sequence is SAK.

This sequence belongs to the TRAFAC class translation factor GTPase superfamily. Classic translation factor GTPase family. IF-2 subfamily.

The protein localises to the cytoplasm. One of the essential components for the initiation of protein synthesis. Protects formylmethionyl-tRNA from spontaneous hydrolysis and promotes its binding to the 30S ribosomal subunits. Also involved in the hydrolysis of GTP during the formation of the 70S ribosomal complex. In Helicobacter pylori (strain P12), this protein is Translation initiation factor IF-2.